The sequence spans 636 residues: Topoisomerase I damage affected protein 7 (636 aa).

Residues 1 to 18 (MNSNSTIGRTTLGESDTI) show a composition bias toward polar residues. 5 disordered regions span residues 1–33 (MNSN…NSRS), 87–109 (TLVS…QYDP), 238–271 (ISSP…SSTN), 299–326 (PTSS…DDTT), and 339–362 (QSTT…STSP). Residue N4 is glycosylated (N-linked (GlcNAc...) asparagine). 2 stretches are compositionally biased toward low complexity: residues 19–33 (SLSF…NSRS) and 87–108 (TLVS…SQYD). N-linked (GlcNAc...) asparagine glycosylation occurs at N257. Residues 457–477 (IVGSVVGSVGGILICVLVVWF) traverse the membrane as a helical segment. N-linked (GlcNAc...) asparagine glycosylation is present at N492. A compositionally biased stretch (polar residues) spans 510–541 (QAKEASLQAQDSGSQQRNTETASANNPFSNEF). The interval 510-551 (QAKEASLQAQDSGSQQRNTETASANNPFSNEFNFKARGNPPP) is disordered. K512 is covalently cross-linked (Glycyl lysine isopeptide (Lys-Gly) (interchain with G-Cter in ubiquitin)). N-linked (GlcNAc...) asparagine glycans are attached at residues N557, N562, and N626. Phosphoserine is present on S628.

The protein belongs to the TDA7 family.

It is found in the vacuole membrane. The chain is Topoisomerase I damage affected protein 7 (TDA7) from Saccharomyces cerevisiae (strain YJM789) (Baker's yeast).